Reading from the N-terminus, the 420-residue chain is MASAGAGLSKRGASNVDAIMPGIRAALLERTRPTVPRIDLSTAENWLLRNEVIELTKDAIRDGLKPHHLSYPNEFAGDADLIKALAAFVNEYFHPHIPVEPDHIATAPGAATCLNTFLYNLCEPGEGILVPAPFWNGFDWLFTARSSAVPVMVHVERSADTLTAKLIPALEKAYEESKIPIRGLLLTNPQNPYGQCYPRSVMEDCIRFCHSKGIHYISDEVYALSNFENPELPDAPPFVSALQIDVKGIGCDLSRVHTFWSTSKDFGSSGFRVGCSITQANEAMHVALALASNTESSSLSAVASTALLTSPRLPELLQLNAQRLQEAYCLMTNFLKKHQIEYIPANSAPFLFARVAPQAQTWEDEKAVIAQLKEAGVNVSGGKAYHVNEDQKGWARLTFALETSRAEEAIKRMETVLGKQ.

Lysine 264 bears the N6-(pyridoxal phosphate)lysine mark.

The protein belongs to the class-I pyridoxal-phosphate-dependent aminotransferase family. Pyridoxal 5'-phosphate serves as cofactor.

Its pathway is mycotoxin biosynthesis. Its function is as follows. Probable aminotransferase; part of the gene cluster that mediates the biosynthesis of aspirochlorine (or antibiotic A30641), an unusual halogenated spiro compound with distinctive antifungal properties due to selective inhibition of protein biosynthesis, and which is also active against bacteria, viruses, and murine tumor cells. The non-ribosomal peptide synthetase (NRPS) aclP is responsible the formation of the diketopiperazine (DKP) core from the condensation of 2 phenylalanine residues. One Phe residue is tailored into chlorotyrosine by hydroxylation and chlorination, whereas the second Phe undergoes an unprecedented C-C bond cleavage to be converted into glycine. After formation of the DKP, sulfur is incorporated into the DKP by conjugation with glutathione by aclG, followed by its stepwise degradation to the thiol by aclI, aclJ and aclK, and the dithiol oxidation by aclT. In addition, oxygenases (aclB, aclC, aclL and aclO) and O-methyltransferases (aclM and aclU) act as tailoring enzymes to produce the intermediate dechloroaspirochlorine. Ultimately, chlorination of dechloroaspirochlorine by the halogenase aclH is the last step in the aspirochlorine pathway. This Aspergillus oryzae (strain ATCC 42149 / RIB 40) (Yellow koji mold) protein is Probable aminotransferase aclI.